Reading from the N-terminus, the 156-residue chain is Endogenous retrovirus group K member 19 Pro protein (156 aa).

Residues Phe21–Leu96 form the Peptidase A2 domain. Asp26 is a catalytic residue. In terms of domain architecture, G-patch spans Tyr111 to Phe156.

This sequence belongs to the peptidase A2 family. HERV class-II K(HML-2) subfamily. Active as a homodimer. Post-translationally, autoproteolytically processed at the N-terminus. Expected C-terminal autoprocessing not detected. The sequence shown is that of the processed Pro protein.

It catalyses the reaction Processing at the authentic HIV-1 PR recognition site and release of the mature p17 matrix and the p24 capsid protein, as a result of the cleavage of the -SQNY-|-PIVQ- cleavage site.. Its function is as follows. Retroviral proteases have roles in the processing of the primary translation products and the maturation of the viral particle. Endogenous Pro proteins may have kept, lost or modified their original function during evolution. This chain is Endogenous retrovirus group K member 19 Pro protein (ERVK-19), found in Homo sapiens (Human).